A 267-amino-acid chain; its full sequence is Small ribosomal subunit protein uS3 (267 aa).

Residues 43–111 form the KH type-2 domain; sequence IRKAMSKDLE…QVQLNIFEVK (69 aa). A disordered region spans residues 216–267; it reads FEEQQAQQSNNRQGRRGDRRPRRGQRNAAPQQNAAAEAPAAAEAPAATETKE. Residues 228–240 show a composition bias toward basic residues; sequence QGRRGDRRPRRGQ. Residues 241–267 are compositionally biased toward low complexity; that stretch reads RNAAPQQNAAAEAPAAAEAPAATETKE.

Belongs to the universal ribosomal protein uS3 family. As to quaternary structure, part of the 30S ribosomal subunit. Forms a tight complex with proteins S10 and S14.

In terms of biological role, binds the lower part of the 30S subunit head. Binds mRNA in the 70S ribosome, positioning it for translation. In Bifidobacterium adolescentis (strain ATCC 15703 / DSM 20083 / NCTC 11814 / E194a), this protein is Small ribosomal subunit protein uS3.